We begin with the raw amino-acid sequence, 193 residues long: Cerebellin-1 (193 aa).

Positions 1–21 are cleaved as a signal peptide; the sequence is MLGVLELLLLGAAWLAGPARG. N-linked (GlcNAc...) asparagine glycosylation occurs at asparagine 23. The tract at residues 34–38 is essential for interaction with NRXN1 and linker of two C1q trimers into disulfide-linked hexamers; the sequence is CLVVC. Positions 57–193 constitute a C1q domain; sequence SGSAKVAFSA…TFSGFLVFPL (137 aa). A necessary for interaction with CBLN3, and homotrimerization region spans residues 62–193; it reads VAFSAIRSTN…TFSGFLVFPL (132 aa). The N-linked (GlcNAc...) asparagine glycan is linked to asparagine 79. The interval 122–147 is essential for interaction with GRID2; sequence YNRQTIQVSLMLNGWPVISAFAGDQD.

As to quaternary structure, homohexamer; disulfide-linked homotrimers. The trimers associate via N-terminal cysteine residues to form disulfide-linked hexamers. May form oligomers with CBLN2, CBLN3 AND CBLN4 prior to secretion. Once secreted, does not interact with other CBLN family members. Interacts with GRID1. Interacts with NRXN1 and NRXN2 long (alpha) and short (beta) isoforms produced by alternative promoter usage. Competes with NLGN1 for NRXN1-binding. Weakly interacts with NRXN3 short isoform and not at all with NRXN3 long isoform. Interacts (via C1q domain) with GRID2; GRID2-binding is calcium-independent; CBLN1 hexamers anchor GRID2 N-terminal domain dimers to monomeric NRXN1 isoform beta; promotes synaptogenesis and mediates the D-Serine-dependent long term depression signals and AMPA receptor endocytosis. Interacts with OTOL1. Post-translationally, the proteolytic processing to yield cerebellin seems to occur either prior to the secretion by presynaptic neurons and subsequent oligomerization or in some other location after release of the mature protein. In terms of processing, sialoglycoprotein. As to expression, in the Purkinje cells postsynaptic structures. In the cerebellum, cerebellin is much less abundant than [des-Ser1]-cerebellin.

Its subcellular location is the secreted. The protein resides in the postsynaptic cell membrane. Functionally, required for synapse integrity and synaptic plasticity. During cerebellar synapse formation, essential for the matching and maintenance of pre- and post-synaptic elements at parallel fiber-Purkinje cell synapses, the establishment of the proper pattern of climbing fiber-Purkinje cell innervation, and induction of long-term depression at parallel fiber-Purkinje cell synapses. Plays a role as a synaptic organizer that acts bidirectionally on both pre- and post-synaptic components. On the one hand induces accumulation of synaptic vesicles in the pre-synaptic part by binding with NRXN1 and in other hand induces clustering of GRID2 and its associated proteins at the post-synaptic site through association of GRID2. NRXN1-CBLN1-GRID2 complex directly induces parallel fiber protrusions that encapsulate spines of Purkinje cells leading to accumulation of GRID2 and synaptic vesicles. Required for CBLN3 export from the endoplasmic reticulum and secretion. NRXN1-CBLN1-GRID2 complex mediates the D-Serine-dependent long term depression signals and AMPA receptor endocytosis. Essential for long-term maintenance but not establishment of excitatory synapses. Inhibits the formation and function of inhibitory GABAergic synapses in cerebellar Purkinje cells. In terms of biological role, the cerebellin peptide exerts neuromodulatory functions. Directly stimulates norepinephrine release via the adenylate cyclase/PKA-dependent signaling pathway; and indirectly enhances adrenocortical secretion in vivo, through a paracrine mechanism involving medullary catecholamine release. The sequence is that of Cerebellin-1 (CBLN1) from Homo sapiens (Human).